A 202-amino-acid polypeptide reads, in one-letter code: Cytochrome c biogenesis ATP-binding export protein CcmA (202 aa).

An ABC transporter domain is found at 3–200; sequence LAAENLSGER…EGTQELKMGA (198 aa). Residue 35–42 participates in ATP binding; sequence GPNGAGKS.

This sequence belongs to the ABC transporter superfamily. CcmA exporter (TC 3.A.1.107) family. In terms of assembly, the complex is composed of two ATP-binding proteins (CcmA) and two transmembrane proteins (CcmB).

Its subcellular location is the cell inner membrane. It carries out the reaction heme b(in) + ATP + H2O = heme b(out) + ADP + phosphate + H(+). Part of the ABC transporter complex CcmAB involved in the biogenesis of c-type cytochromes; once thought to export heme, this seems not to be the case, but its exact role is uncertain. Responsible for energy coupling to the transport system. This Chelativorans sp. (strain BNC1) protein is Cytochrome c biogenesis ATP-binding export protein CcmA.